The following is a 283-amino-acid chain: 4-diphosphocytidyl-2-C-methyl-D-erythritol kinase (283 aa).

Lysine 12 is a catalytic residue. 94 to 104 (PAQAGLGGGSS) is an ATP binding site. Aspartate 136 is an active-site residue.

The protein belongs to the GHMP kinase family. IspE subfamily.

The enzyme catalyses 4-CDP-2-C-methyl-D-erythritol + ATP = 4-CDP-2-C-methyl-D-erythritol 2-phosphate + ADP + H(+). It participates in isoprenoid biosynthesis; isopentenyl diphosphate biosynthesis via DXP pathway; isopentenyl diphosphate from 1-deoxy-D-xylulose 5-phosphate: step 3/6. Functionally, catalyzes the phosphorylation of the position 2 hydroxy group of 4-diphosphocytidyl-2C-methyl-D-erythritol. This is 4-diphosphocytidyl-2-C-methyl-D-erythritol kinase from Acidovorax ebreus (strain TPSY) (Diaphorobacter sp. (strain TPSY)).